The primary structure comprises 173 residues: RNA polymerase sigma factor YlaC (173 aa).

It belongs to the sigma-70 factor family. ECF subfamily.

Sigma factors are initiation factors that promote the attachment of RNA polymerase to specific initiation sites and are then released. This sigma factor contributes to oxidative stress resistance. The polypeptide is RNA polymerase sigma factor YlaC (ylaC) (Bacillus subtilis (strain 168)).